Consider the following 325-residue polypeptide: UPF0324 membrane protein Bd1437 (325 aa).

Helical transmembrane passes span 21 to 43, 58 to 80, 87 to 105, 115 to 137, 144 to 166, 211 to 230, 243 to 260, and 302 to 324; these read IAALLCFFPFVSSAAALVLGIVL, YTHHLLSLSVIGLGAGMDLMVVG, IGYTVVGISFTLLLGMLIG, STLITVGTAICGGSAIAAVAPTI, VSVALGTVFMLNACALVIFPWIG, ARALWIVPVTFLIGLFYFRG, PWFILGFLIAAALVTWIP, and LQGVGLWIVVASCTLGAILIGWI.

This sequence belongs to the UPF0324 family.

Its subcellular location is the cell membrane. The polypeptide is UPF0324 membrane protein Bd1437 (Bdellovibrio bacteriovorus (strain ATCC 15356 / DSM 50701 / NCIMB 9529 / HD100)).